The primary structure comprises 248 residues: Type III pantothenate kinase (248 aa).

6 to 13 (DCGNSFIK) is an ATP binding site. Residues Tyr-92 and 99–102 (GLDR) contribute to the substrate site. The active-site Proton acceptor is Asp-101. Asp-121 provides a ligand contact to K(+). Thr-124 is a binding site for ATP. Thr-180 is a binding site for substrate.

Belongs to the type III pantothenate kinase family. As to quaternary structure, homodimer. It depends on NH4(+) as a cofactor. K(+) serves as cofactor.

It localises to the cytoplasm. It carries out the reaction (R)-pantothenate + ATP = (R)-4'-phosphopantothenate + ADP + H(+). It participates in cofactor biosynthesis; coenzyme A biosynthesis; CoA from (R)-pantothenate: step 1/5. Functionally, catalyzes the phosphorylation of pantothenate (Pan), the first step in CoA biosynthesis. This Ectopseudomonas mendocina (strain ymp) (Pseudomonas mendocina) protein is Type III pantothenate kinase.